The chain runs to 157 residues: CASP-like protein 1 (157 aa).

Residues 1 to 13 (MKTEARDGGSEWR) are Cytoplasmic-facing. Residues 14-34 (WVAIFELFLRLAAIVSTSVAV) form a helical membrane-spanning segment. Over 35–40 (YAAMGK) the chain is Extracellular. Residues 41-61 (IFVVAVNGVACFYLLMSLPVS) traverse the membrane as a helical segment. Residues 62-82 (IFNIMRPHAYPANRVFLNIMD) are Cytoplasmic-facing. The chain crosses the membrane as a helical span at residues 83–103 (MVMVALVTAGALAAGIVYLVE). Over 104-121 (KAGNARASWVSVWSQFDS) the chain is Extracellular. The helical transmembrane segment at 122-142 (SSCFAVLALILHVLLSGVILY) threads the bilayer. Residues 143–157 (KQALNIKFKKLDSVD) lie on the Cytoplasmic side of the membrane.

This sequence belongs to the Casparian strip membrane proteins (CASP) family. Homodimer and heterodimers.

The protein localises to the cell membrane. This is CASP-like protein 1 from Picea sitchensis (Sitka spruce).